Consider the following 379-residue polypeptide: Carbamoyl phosphate synthase small chain (379 aa).

Residues 1-188 (MSTPAILALA…ELGKGFTQPE (188 aa)) form a CPSase region. Residues S47, G240, and G242 each coordinate L-glutamine. Residues 192 to 379 (HVVAYDYGVK…FIELIEAAKK (188 aa)) form the Glutamine amidotransferase type-1 domain. C269 (nucleophile) is an active-site residue. Residues L270, Q273, N311, G313, and F314 each contribute to the L-glutamine site. Active-site residues include H353 and E355.

It belongs to the CarA family. In terms of assembly, composed of two chains; the small (or glutamine) chain promotes the hydrolysis of glutamine to ammonia, which is used by the large (or ammonia) chain to synthesize carbamoyl phosphate. Tetramer of heterodimers (alpha,beta)4.

It carries out the reaction hydrogencarbonate + L-glutamine + 2 ATP + H2O = carbamoyl phosphate + L-glutamate + 2 ADP + phosphate + 2 H(+). The enzyme catalyses L-glutamine + H2O = L-glutamate + NH4(+). It functions in the pathway amino-acid biosynthesis; L-arginine biosynthesis; carbamoyl phosphate from bicarbonate: step 1/1. Its pathway is pyrimidine metabolism; UMP biosynthesis via de novo pathway; (S)-dihydroorotate from bicarbonate: step 1/3. Functionally, small subunit of the glutamine-dependent carbamoyl phosphate synthetase (CPSase). CPSase catalyzes the formation of carbamoyl phosphate from the ammonia moiety of glutamine, carbonate, and phosphate donated by ATP, constituting the first step of 2 biosynthetic pathways, one leading to arginine and/or urea and the other to pyrimidine nucleotides. The small subunit (glutamine amidotransferase) binds and cleaves glutamine to supply the large subunit with the substrate ammonia. The polypeptide is Carbamoyl phosphate synthase small chain (Acinetobacter baylyi (strain ATCC 33305 / BD413 / ADP1)).